A 95-amino-acid polypeptide reads, in one-letter code: Small ribosomal subunit protein uS19 (95 aa).

Belongs to the universal ribosomal protein uS19 family.

In terms of biological role, protein S19 forms a complex with S13 that binds strongly to the 16S ribosomal RNA. The chain is Small ribosomal subunit protein uS19 from Coxiella burnetii (strain CbuK_Q154) (Coxiella burnetii (strain Q154)).